Reading from the N-terminus, the 460-residue chain is Bifunctional protein GlmU (460 aa).

Positions M1–R229 are pyrophosphorylase. UDP-N-acetyl-alpha-D-glucosamine is bound by residues L8–G11, K22, Q72, and G77–T78. D102 is a Mg(2+) binding site. Positions 139, 154, 169, and 227 each coordinate UDP-N-acetyl-alpha-D-glucosamine. Residue N227 participates in Mg(2+) binding. Residues V230–N250 form a linker region. The segment at G251–K460 is N-acetyltransferase. 2 residues coordinate UDP-N-acetyl-alpha-D-glucosamine: R332 and K350. The active-site Proton acceptor is H362. Y365 and N376 together coordinate UDP-N-acetyl-alpha-D-glucosamine. Acetyl-CoA is bound by residues A379, N385–Y386, S404, A422, and R439.

This sequence in the N-terminal section; belongs to the N-acetylglucosamine-1-phosphate uridyltransferase family. The protein in the C-terminal section; belongs to the transferase hexapeptide repeat family. Homotrimer. Mg(2+) serves as cofactor.

Its subcellular location is the cytoplasm. It carries out the reaction alpha-D-glucosamine 1-phosphate + acetyl-CoA = N-acetyl-alpha-D-glucosamine 1-phosphate + CoA + H(+). The catalysed reaction is N-acetyl-alpha-D-glucosamine 1-phosphate + UTP + H(+) = UDP-N-acetyl-alpha-D-glucosamine + diphosphate. The protein operates within nucleotide-sugar biosynthesis; UDP-N-acetyl-alpha-D-glucosamine biosynthesis; N-acetyl-alpha-D-glucosamine 1-phosphate from alpha-D-glucosamine 6-phosphate (route II): step 2/2. It functions in the pathway nucleotide-sugar biosynthesis; UDP-N-acetyl-alpha-D-glucosamine biosynthesis; UDP-N-acetyl-alpha-D-glucosamine from N-acetyl-alpha-D-glucosamine 1-phosphate: step 1/1. It participates in bacterial outer membrane biogenesis; LPS lipid A biosynthesis. In terms of biological role, catalyzes the last two sequential reactions in the de novo biosynthetic pathway for UDP-N-acetylglucosamine (UDP-GlcNAc). The C-terminal domain catalyzes the transfer of acetyl group from acetyl coenzyme A to glucosamine-1-phosphate (GlcN-1-P) to produce N-acetylglucosamine-1-phosphate (GlcNAc-1-P), which is converted into UDP-GlcNAc by the transfer of uridine 5-monophosphate (from uridine 5-triphosphate), a reaction catalyzed by the N-terminal domain. The sequence is that of Bifunctional protein GlmU from Streptococcus pyogenes serotype M12 (strain MGAS9429).